The primary structure comprises 837 residues: Putative outer membrane protein assembly factor TP_0326 (837 aa).

The N-terminal stretch at 1-21 (MLKKASAFLIASCCVMSLAWA) is a signal peptide. Over 22-433 (QANDNWYEGK…ILNVEEQSTA (412 aa)) the chain is Periplasmic. 5 consecutive POTRA domains span residues 31–105 (KPIS…VKER), 106–182 (PSVK…IQEG), 185–273 (TVVS…VVEG), 276–354 (YRYG…VVER), and 357–430 (SHVE…VEEQ). Residues 434–442 (NVQFGVTFS) traverse the membrane as a beta stranded segment. Residues 443-450 (GVGEAGTF) are Extracellular; loop L1-facing. Residues 451-461 (PLSLFCQWEEK) traverse the membrane as a beta stranded segment. At 462–468 (NFLGKGN) the chain is on the periplasmic side. A beta stranded membrane pass occupies residues 469 to 476 (EISVNATL). Over 477–478 (GS) the chain is Extracellular; loop L2. The beta stranded transmembrane segment at 479–489 (EAQSLKLGYVE) threads the bilayer. Over 490–499 (RWFLGSPLTV) the chain is Periplasmic. The beta stranded transmembrane segment at 500 to 520 (GFDFELTHKNLFVYRAGSYGN) threads the bilayer. The Extracellular; loop L3 portion of the chain corresponds to 521 to 530 (GLPHPYTSRE). Residues 531 to 543 (QWASSPGLAESFR) form a beta stranded membrane-spanning segment. The Periplasmic portion of the chain corresponds to 544–554 (LKYSRFESAIG). A beta stranded transmembrane segment spans residues 555 to 568 (AHTGYQWYPRYAVI). The Extracellular; loop L4 portion of the chain corresponds to 569-601 (RVNGGVDFRVVKNFYDKDNNQPFDLTVKEQLNW). Residues 602–615 (TSINSFWTSVSFDG) traverse the membrane as a beta stranded segment. Residues 616–623 (RDFAYDPS) lie on the Periplasmic side of the membrane. A beta stranded transmembrane segment spans residues 624–636 (SGWFLGQRCTFNG). The Extracellular; loop L5 segment spans residues 637-644 (LVPFLEKE). Residues 645–658 (HSFRSDTKAEFYVT) traverse the membrane as a beta stranded segment. The Periplasmic segment spans residues 659-667 (LLNYPVSAV). Residues 668-682 (WNLKFVLAFYTGVSV) form a beta stranded membrane-spanning segment. Residues 683-724 (QTYYGRRKSENGKGNGVRSGALVIDGVLVGRGWSEDAKKNTG) lie on the Extracellular; loop L6 side of the membrane. Residues 725–736 (DLLLHHWIEFRW) traverse the membrane as a beta stranded segment. The Periplasmic portion of the chain corresponds to 737-741 (PLAHG). A beta stranded membrane pass occupies residues 742–756 (IVSFDFFFDAAMVYN). The Extracellular; loop L7 segment spans residues 757–786 (IESQSPNGSSSASSSSSSSSSSSRTTSSEG). The interval 761–785 (SPNGSSSASSSSSSSSSSSRTTSSE) is disordered. The span at 765–784 (SSSASSSSSSSSSSSRTTSS) shows a compositional bias: low complexity. A beta stranded transmembrane segment spans residues 787 to 799 (LYKMSYGPGLRFT). Residues 800–802 (LPQ) are Periplasmic-facing. A beta stranded membrane pass occupies residues 803 to 814 (FPLKLAFANTFT). The Extracellular; loop L8 segment spans residues 815-824 (SPGGIPKTKK). The chain crosses the membrane as a beta stranded span at residues 825 to 829 (NWNFV). The Periplasmic portion of the chain corresponds to 830 to 837 (LSFTVNNL).

The protein belongs to the BamA family. In terms of assembly, part of 2 complexes of about 239 and 164 kDa.

It is found in the cell outer membrane. In terms of biological role, might be part of the outer membrane protein assembly complex, which is involved in assembly and insertion of beta-barrel proteins into the outer membrane. Both rabbit immune serum and rabbit antiserum specific for extracytoplasmic loop L4 promote bacteria internalization by rabbit peritoneal macrophages. Pools of human syphilitic sera from the USA and Columbia recognize both the N-terminal POTRA-containing and C-terminal beta-barrel domains as well as loop L4, showing this protein stimulates the immune system in both humans and rabbits. The polypeptide is Putative outer membrane protein assembly factor TP_0326 (tp92) (Treponema pallidum (strain Nichols)).